A 138-amino-acid chain; its full sequence is Envelope glycoprotein N (138 aa).

An N-terminal signal peptide occupies residues Met1 to Gly21. Residues Asn22 to Ser101 are Virion surface-facing. The helical transmembrane segment at Phe102–Leu122 threads the bilayer. At Arg123–Tyr138 the chain is on the intravirion side.

Belongs to the herpesviridae glycoprotein N family. In terms of assembly, interacts (via N-terminus) with gM (via N-terminus). The gM-gN heterodimer forms the gCII complex. O-glycosylated.

It localises to the virion membrane. Its subcellular location is the host membrane. The protein localises to the host Golgi apparatus. The protein resides in the host trans-Golgi network. Its function is as follows. Envelope glycoprotein necessary for proper maturation of gM and modulation of its membrane fusion activity. Also plays a critical role in virion morphogenesis. In Human cytomegalovirus (strain AD169) (HHV-5), this protein is Envelope glycoprotein N.